The following is a 388-amino-acid chain: tRNA (guanine(26)-N(2))-dimethyltransferase (388 aa).

Residues 7–381 (KTVEEGLTKI…APLKKIKEII (375 aa)) enclose the Trm1 methyltransferase domain. Residues arginine 40, arginine 70, aspartate 88, aspartate 115, and alanine 116 each coordinate S-adenosyl-L-methionine. Zn(2+) contacts are provided by cysteine 248, cysteine 251, cysteine 268, and cysteine 271.

This sequence belongs to the class I-like SAM-binding methyltransferase superfamily. Trm1 family.

It catalyses the reaction guanosine(26) in tRNA + 2 S-adenosyl-L-methionine = N(2)-dimethylguanosine(26) in tRNA + 2 S-adenosyl-L-homocysteine + 2 H(+). Functionally, dimethylates a single guanine residue at position 26 of a number of tRNAs using S-adenosyl-L-methionine as donor of the methyl groups. This Methanobrevibacter smithii (strain ATCC 35061 / DSM 861 / OCM 144 / PS) protein is tRNA (guanine(26)-N(2))-dimethyltransferase.